A 189-amino-acid chain; its full sequence is dTTP/UTP pyrophosphatase (189 aa).

Asp70 acts as the Proton acceptor in catalysis.

Belongs to the Maf family. YhdE subfamily. A divalent metal cation is required as a cofactor.

The protein localises to the cytoplasm. It catalyses the reaction dTTP + H2O = dTMP + diphosphate + H(+). The enzyme catalyses UTP + H2O = UMP + diphosphate + H(+). Its function is as follows. Nucleoside triphosphate pyrophosphatase that hydrolyzes dTTP and UTP. May have a dual role in cell division arrest and in preventing the incorporation of modified nucleotides into cellular nucleic acids. In Akkermansia muciniphila (strain ATCC BAA-835 / DSM 22959 / JCM 33894 / BCRC 81048 / CCUG 64013 / CIP 107961 / Muc), this protein is dTTP/UTP pyrophosphatase.